The following is a 177-amino-acid chain: Large ribosomal subunit protein uL6 (177 aa).

Belongs to the universal ribosomal protein uL6 family. As to quaternary structure, part of the 50S ribosomal subunit.

In terms of biological role, this protein binds to the 23S rRNA, and is important in its secondary structure. It is located near the subunit interface in the base of the L7/L12 stalk, and near the tRNA binding site of the peptidyltransferase center. The chain is Large ribosomal subunit protein uL6 from Methanosarcina barkeri (strain Fusaro / DSM 804).